A 101-amino-acid polypeptide reads, in one-letter code: Small ribosomal subunit protein uS17 (101 aa).

It belongs to the universal ribosomal protein uS17 family. In terms of assembly, part of the 30S ribosomal subunit.

Its function is as follows. One of the primary rRNA binding proteins, it binds specifically to the 5'-end of 16S ribosomal RNA. This is Small ribosomal subunit protein uS17 from Koribacter versatilis (strain Ellin345).